A 347-amino-acid polypeptide reads, in one-letter code: Phenylalanine--tRNA ligase alpha subunit (347 aa).

Glu-262 is a Mg(2+) binding site.

It belongs to the class-II aminoacyl-tRNA synthetase family. Phe-tRNA synthetase alpha subunit type 1 subfamily. As to quaternary structure, tetramer of two alpha and two beta subunits. Mg(2+) serves as cofactor.

Its subcellular location is the cytoplasm. It carries out the reaction tRNA(Phe) + L-phenylalanine + ATP = L-phenylalanyl-tRNA(Phe) + AMP + diphosphate + H(+). This chain is Phenylalanine--tRNA ligase alpha subunit, found in Roseiflexus castenholzii (strain DSM 13941 / HLO8).